Consider the following 616-residue polypeptide: Endonuclease 8-like 3 (616 aa).

An FPG-type zinc finger spans residues 271 to 305; the sequence is KVYKRPNCGQCGTKITVCRLGEHNRMTYFCPKCQK. A RanBP2-type zinc finger spans residues 341–370; sequence KEEHWACAVCTLINKPSDKQCDACLTLRPE. The tract at residues 491 to 524 is disordered; the sequence is LKTGHTTSNTIHLSSTISSPQSKMTGDAAAKTGN. A compositionally biased stretch (polar residues) spans 494–514; sequence GHTTSNTIHLSSTISSPQSKM. Residues Cys527, His530, Cys553, Cys561, Cys574, His576, Cys599, and Cys607 each coordinate Zn(2+). 2 consecutive GRF-type zinc fingers follow at residues 527–570 and 574–616; these read CSAH…ADLH and CNHG…AKTE.

This sequence belongs to the FPG family.

The protein localises to the nucleus. The protein resides in the chromosome. The catalysed reaction is 2'-deoxyribonucleotide-(2'-deoxyribose 5'-phosphate)-2'-deoxyribonucleotide-DNA = a 3'-end 2'-deoxyribonucleotide-(2,3-dehydro-2,3-deoxyribose 5'-phosphate)-DNA + a 5'-end 5'-phospho-2'-deoxyribonucleoside-DNA + H(+). Its function is as follows. DNA glycosylase which prefers single-stranded DNA (ssDNA), or partially ssDNA structures such as bubble and fork structures, to double-stranded DNA (dsDNA). Mediates interstrand cross-link repair in response to replication stress: recruited to replication stress sites via interaction with ubiquitinated CMG helicase and acts by mediating DNA glycosylase activity. Cleaves one of the two N-glycosyl bonds comprising the interstrand cross-link, which avoids the formation of a double-strand break but generates an abasic site that is bypassed by translesion synthesis polymerases. The protein is Endonuclease 8-like 3 of Xenopus laevis (African clawed frog).